The sequence spans 187 residues: Large ribosomal subunit protein bL32m (187 aa).

Zn(2+)-binding residues include cysteine 109, cysteine 112, cysteine 122, and cysteine 125.

Belongs to the bacterial ribosomal protein bL32 family. Component of the mitochondrial ribosome large subunit (39S) which comprises a 16S rRNA and about 50 distinct proteins. Post-translationally, MRPL32 precursor is processed by the m-AAA protease (composed of AFG3L2 and SPG7), which cleaves the N-terminal transit peptide. Cleavage by the m-AAA protease takes place prior to assembly into the large subunit, an essential step for mitochondrial ribosome (mitoribosome) assembly. Proper processing by the m-AAA protease is dependent on the zinc-binding region within the tightly folded C-terminal domain of MRPL32: zinc-dependent folding halts degradation initiated from the N-terminus and triggers the release of mature MRPL32.

It is found in the mitochondrion. Its function is as follows. Component of the mitochondrial large ribosomal subunit (mt-LSU). The mitochondrial ribosome (mitoribosome) is a large ribonucleoprotein complex responsible for the synthesis of proteins inside mitochondria. This is Large ribosomal subunit protein bL32m (Mrpl32) from Mus musculus (Mouse).